Consider the following 155-residue polypeptide: Large ribosomal subunit protein eL24A (155 aa).

S7 carries the phosphoserine modification. Residues 66–155 (EVAKKRSRKT…AFQKVAATSR (90 aa)) are disordered. A compositionally biased stretch (basic and acidic residues) spans 89 to 129 (LIKERRSLKPEVRKANREEKLKANKEKKKAEKAARKAEKAK). Positions 131–142 (AGTQSSKFSKQQ) are enriched in polar residues.

It belongs to the eukaryotic ribosomal protein eL24 family. As to quaternary structure, component of the large ribosomal subunit (LSU). Mature yeast ribosomes consist of a small (40S) and a large (60S) subunit. The 40S small subunit contains 1 molecule of ribosomal RNA (18S rRNA) and 33 different proteins (encoded by 57 genes). The large 60S subunit contains 3 rRNA molecules (25S, 5.8S and 5S rRNA) and 46 different proteins (encoded by 81 genes).

The protein resides in the cytoplasm. Its function is as follows. Component of the ribosome, a large ribonucleoprotein complex responsible for the synthesis of proteins in the cell. The small ribosomal subunit (SSU) binds messenger RNAs (mRNAs) and translates the encoded message by selecting cognate aminoacyl-transfer RNA (tRNA) molecules. The large subunit (LSU) contains the ribosomal catalytic site termed the peptidyl transferase center (PTC), which catalyzes the formation of peptide bonds, thereby polymerizing the amino acids delivered by tRNAs into a polypeptide chain. The nascent polypeptides leave the ribosome through a tunnel in the LSU and interact with protein factors that function in enzymatic processing, targeting, and the membrane insertion of nascent chains at the exit of the ribosomal tunnel. In Saccharomyces cerevisiae (strain ATCC 204508 / S288c) (Baker's yeast), this protein is Large ribosomal subunit protein eL24A.